Reading from the N-terminus, the 525-residue chain is GMP synthase [glutamine-hydrolyzing] (525 aa).

The region spanning 9-207 (RILILDFGSQ…VLEISGCEAL (199 aa)) is the Glutamine amidotransferase type-1 domain. The active-site Nucleophile is C86. Residues H181 and E183 contribute to the active site. Positions 208-400 (WTPANIVEDA…LGLPYDMVYR (193 aa)) constitute a GMPS ATP-PPase domain. 235–241 (SGGVDSS) is a binding site for ATP.

Homodimer.

It catalyses the reaction XMP + L-glutamine + ATP + H2O = GMP + L-glutamate + AMP + diphosphate + 2 H(+). Its pathway is purine metabolism; GMP biosynthesis; GMP from XMP (L-Gln route): step 1/1. Functionally, catalyzes the synthesis of GMP from XMP. The protein is GMP synthase [glutamine-hydrolyzing] of Ectopseudomonas mendocina (strain ymp) (Pseudomonas mendocina).